A 249-amino-acid polypeptide reads, in one-letter code: 2,3-bisphosphoglycerate-dependent phosphoglycerate mutase (249 aa).

Residues 8 to 15, 21 to 22, Arg-60, 87 to 90, Lys-98, 114 to 115, and 183 to 184 each bind substrate; these read RHGQSAWN, TG, ERHY, RR, and GN. The Tele-phosphohistidine intermediate role is filled by His-9. The active-site Proton donor/acceptor is Glu-87. The disordered stretch occupies residues 115-137; sequence RSYDTPPPPLPADDPRSPAGDAR.

It belongs to the phosphoglycerate mutase family. BPG-dependent PGAM subfamily. In terms of assembly, homodimer.

The catalysed reaction is (2R)-2-phosphoglycerate = (2R)-3-phosphoglycerate. It participates in carbohydrate degradation; glycolysis; pyruvate from D-glyceraldehyde 3-phosphate: step 3/5. Functionally, catalyzes the interconversion of 2-phosphoglycerate and 3-phosphoglycerate. This Nitratidesulfovibrio vulgaris (strain DSM 19637 / Miyazaki F) (Desulfovibrio vulgaris) protein is 2,3-bisphosphoglycerate-dependent phosphoglycerate mutase.